Reading from the N-terminus, the 205-residue chain is Outer-membrane lipoprotein LolB (205 aa).

A signal peptide spans 1–17; sequence MFLRHVIVFSLIALLTG. Cys18 is lipidated: N-palmitoyl cysteine. A lipid anchor (S-diacylglycerol cysteine) is attached at Cys18.

This sequence belongs to the LolB family. In terms of assembly, monomer.

Its subcellular location is the cell outer membrane. In terms of biological role, plays a critical role in the incorporation of lipoproteins in the outer membrane after they are released by the LolA protein. The polypeptide is Outer-membrane lipoprotein LolB (Pseudomonas savastanoi pv. phaseolicola (strain 1448A / Race 6) (Pseudomonas syringae pv. phaseolicola (strain 1448A / Race 6))).